A 264-amino-acid polypeptide reads, in one-letter code: Putative ankyrin repeat domain-containing protein 19 (264 aa).

ANK repeat units follow at residues 67–96 (KDRT…QINI), 100–129 (LNRT…NPNI), 133–162 (YSNT…NIEA), 166–195 (EGNT…NLHA), and 199–228 (FRRT…NIFS).

This chain is Putative ankyrin repeat domain-containing protein 19 (ANKRD19P), found in Homo sapiens (Human).